Here is a 500-residue protein sequence, read N- to C-terminus: Cholesterol 24-hydroxylase (500 aa).

The chain crosses the membrane as a helical span at residues 3 to 23 (PGLLLLGSAVLLAFGLCCTFV). Cys437 is a heme binding site.

It belongs to the cytochrome P450 family. It depends on heme as a cofactor. Expressed in high level in the pyramidal cells of the hippocampus, Purkinje cells of the cerebellum, and neuronal cell bodies in layers II/III, V, and VI of the cortex. Expressed in hippocampal and cerebellar interneurons, in retinal ganglion cells, and in a subset of retinal cells localized to the inner nuclear layer (at protein level).

Its subcellular location is the endoplasmic reticulum membrane. The protein resides in the microsome membrane. The protein localises to the postsynapse. It localises to the presynapse. It is found in the cell projection. Its subcellular location is the dendrite. It carries out the reaction cholesterol + reduced [NADPH--hemoprotein reductase] + O2 = (24S)-hydroxycholesterol + oxidized [NADPH--hemoprotein reductase] + H2O + H(+). The enzyme catalyses cholestanol + reduced [NADPH--hemoprotein reductase] + O2 = (24S)-hydroxycholestanol + oxidized [NADPH--hemoprotein reductase] + H2O + H(+). The catalysed reaction is 7-dehydrocholesterol + reduced [NADPH--hemoprotein reductase] + O2 = cholesta-5,7-dien-3beta,24S-diol + oxidized [NADPH--hemoprotein reductase] + H2O + H(+). It catalyses the reaction 7-dehydrocholesterol + reduced [NADPH--hemoprotein reductase] + O2 = cholesta-5,7-dien-3beta,25-diol + oxidized [NADPH--hemoprotein reductase] + H2O + H(+). It carries out the reaction desmosterol + reduced [NADPH--hemoprotein reductase] + O2 = (24Z),26-hydroxydesmosterol + oxidized [NADPH--hemoprotein reductase] + H2O + H(+). The enzyme catalyses desmosterol + reduced [NADPH--hemoprotein reductase] + O2 = (24S)-25-epoxycholesterol + oxidized [NADPH--hemoprotein reductase] + H2O + H(+). The catalysed reaction is 4beta-hydroxycholesterol + reduced [NADPH--hemoprotein reductase] + O2 = 4beta,24S-dihydroxycholesterol + oxidized [NADPH--hemoprotein reductase] + H2O + H(+). It catalyses the reaction (24S)-hydroxycholesterol + reduced [NADPH--hemoprotein reductase] + O2 = (24S,25R)-24,26-dihydroxycholesterol + oxidized [NADPH--hemoprotein reductase] + H2O + H(+). It carries out the reaction (24S)-hydroxycholesterol + reduced [NADPH--hemoprotein reductase] + O2 = 24S,25-dihydroxycholesterol + oxidized [NADPH--hemoprotein reductase] + H2O + H(+). The enzyme catalyses 7alpha-hydroxycholesterol + reduced [NADPH--hemoprotein reductase] + O2 = (24S)-7alpha-dihydroxycholesterol + oxidized [NADPH--hemoprotein reductase] + H2O + H(+). The catalysed reaction is progesterone + reduced [NADPH--hemoprotein reductase] + O2 = 17alpha-hydroxyprogesterone + oxidized [NADPH--hemoprotein reductase] + H2O + H(+). It catalyses the reaction testosterone + reduced [NADPH--hemoprotein reductase] + O2 = 16beta,17beta-dihydroxyandrost-4-en-3-one + oxidized [NADPH--hemoprotein reductase] + H2O + H(+). It carries out the reaction testosterone + reduced [NADPH--hemoprotein reductase] + O2 = 2-hydroxytestosterone + oxidized [NADPH--hemoprotein reductase] + H2O + H(+). The enzyme catalyses testosterone + reduced [NADPH--hemoprotein reductase] + O2 = 6beta,17beta-dihydroxyandrost-4-en-3-one + oxidized [NADPH--hemoprotein reductase] + H2O + H(+). Its pathway is steroid metabolism; cholesterol degradation. It functions in the pathway lipid metabolism; C21-steroid hormone metabolism. Functionally, P450 monooxygenase that plays a major role in cholesterol homeostasis in the brain. Primarily catalyzes the hydroxylation (with S stereochemistry) at C-24 of cholesterol side chain, triggering cholesterol diffusion out of neurons and its further degradation. By promoting constant cholesterol elimination in neurons, may activate the mevalonate pathway and coordinate the synthesis of new cholesterol and nonsterol isoprenoids involved in synaptic activity and learning. Further hydroxylates cholesterol derivatives and hormone steroids on both the ring and side chain of these molecules, converting them into active oxysterols involved in lipid signaling and biosynthesis. Acts as an epoxidase converting cholesta-5,24-dien-3beta-ol/desmosterol into (24S),25-epoxycholesterol, an abundant lipid ligand of nuclear NR1H2 and NR1H3 receptors shown to promote neurogenesis in developing brain. May also catalyze the oxidative metabolism of xenobiotics, such as clotrimazole. In Mus musculus (Mouse), this protein is Cholesterol 24-hydroxylase.